Here is a 612-residue protein sequence, read N- to C-terminus: Methionine--tRNA ligase (612 aa).

Positions 12-22 match the 'HIGH' region motif; it reads PYANGPRHIGH. Zn(2+)-binding residues include cysteine 144, cysteine 147, cysteine 157, and cysteine 160. A 'KMSKS' region motif is present at residues 348–352; sequence KFSSS. An ATP-binding site is contributed by serine 351.

Belongs to the class-I aminoacyl-tRNA synthetase family. MetG type 1 subfamily. As to quaternary structure, monomer. It depends on Zn(2+) as a cofactor.

It localises to the cytoplasm. It carries out the reaction tRNA(Met) + L-methionine + ATP = L-methionyl-tRNA(Met) + AMP + diphosphate. Its function is as follows. Is required not only for elongation of protein synthesis but also for the initiation of all mRNA translation through initiator tRNA(fMet) aminoacylation. This Corynebacterium kroppenstedtii (strain DSM 44385 / JCM 11950 / CIP 105744 / CCUG 35717) protein is Methionine--tRNA ligase.